We begin with the raw amino-acid sequence, 704 residues long: Meprin A subunit beta (704 aa).

The first 20 residues, 1-20 (MDARHQPWFLVFATFLLVSG), serve as a signal peptide directing secretion. Residues 21-64 (LPAPEKFVKDIDGGIDQDIFDINQGLGLDLFEGDIKLEANGKNS) constitute a propeptide that is removed on maturation. Topologically, residues 21–654 (LPAPEKFVKD…RCEKRGSTRD (634 aa)) are extracellular. The region spanning 63–257 (NSIIGDHKRW…LKLNQLYNCT (195 aa)) is the Peptidase M12A domain. 3 disulfide bridges follow: cysteine 104–cysteine 256, cysteine 125–cysteine 145, and cysteine 266–cysteine 428. Residue histidine 153 coordinates Zn(2+). Glutamate 154 is an active-site residue. Zn(2+) is bound by residues histidine 157 and histidine 163. Asparagine 193, asparagine 219, asparagine 255, asparagine 316, asparagine 422, asparagine 437, asparagine 529, asparagine 548, and asparagine 593 each carry an N-linked (GlcNAc...) asparagine glycan. An MAM domain is found at 261–430 (SFMDSCDFEL…INLSETRCPH (170 aa)). Residues 431–586 (HIWHIQNFTQ…GDDIYILLTV (156 aa)) enclose the MATH domain. An EGF-like domain is found at 607–647 (VHNACSEVVCQNGGICVVQDGRAECKCPAGEDWWYMGKRCE). Disulfide bonds link cysteine 611-cysteine 622, cysteine 616-cysteine 631, and cysteine 633-cysteine 646. The helical transmembrane segment at 655 to 678 (TVIIAVSSTVTVFAVMLIITLVSV) threads the bilayer. The Cytoplasmic segment spans residues 679-704 (YCTRRKYRKKARANTAAMTLENQHAF). The residue at position 697 (threonine 697) is a Phosphothreonine.

In terms of assembly, homotetramer consisting of disulfide-linked beta subunits, or heterotetramer of two alpha and two beta subunits formed by non-covalent association of two disulfide-linked heterodimers. Interacts with MBL2 through its carbohydrate moiety. This interaction may inhibit its catalytic activity. Interacts with TSPAN8. It depends on Zn(2+) as a cofactor. Proteolytically activated by trypsin in the intestinal lumen and kallikrein-related peptidases in other tissues. In terms of processing, N-glycosylated; contains high mannose and/or complex biantennary structures. Post-translationally, phosphorylated by PKC at multiple sites of its cytoplasmic part. Phosphorylation dcreases activity at the cell surface, leading to diminished substrate cleavage. As to expression, isoform 1 is expressed in kidney, intestinal brush borders, and salivary ducts. Isoform 2 has been found in carcinoma cells.

It is found in the cell membrane. The protein localises to the secreted. It catalyses the reaction Hydrolysis of proteins, including azocasein, and peptides. Hydrolysis of 5-His-|-Leu-6, 6-Leu-|-Cys-7, 14-Ala-|-Leu-15 and 19-Cys-|-Gly-20 bonds in insulin B chain.. Its activity is regulated as follows. Strongly inhibited by fetuin-A/AHSG. Inhibited by cysteine and by the metal ion chelators EDTA and 1,10-phenanthroline. Not inhibited by 3,4-dichloroisocourmarin, soybean trypsin inhibitor, or the cysteine proteinase inhibitors iodoacetic acid and E-64. In terms of biological role, membrane metallopeptidase that sheds many membrane-bound proteins. Exhibits a strong preference for acidic amino acids at the P1' position. Known substrates include: FGF19, VGFA, IL1B, IL18, procollagen I and III, E-cadherin, KLK7, gastrin, ADAM10, tenascin-C. The presence of several pro-inflammatory cytokine among substrates implicate MEP1B in inflammation. It is also involved in tissue remodeling due to its capability to degrade extracellular matrix components. The protein is Meprin A subunit beta (Mep1b) of Mus musculus (Mouse).